The sequence spans 1412 residues: DNA-directed RNA polymerase subunit beta' (1412 aa).

Positions 70, 72, 85, and 88 each coordinate Zn(2+). Mg(2+)-binding residues include Asp458, Asp460, and Asp462. 4 residues coordinate Zn(2+): Cys813, Cys887, Cys894, and Cys897. Positions 1388–1412 are disordered; sequence EQALLTPATTAEAVVGEEPAPPPAQ. Residues 1393 to 1405 show a composition bias toward low complexity; sequence TPATTAEAVVGEE.

Belongs to the RNA polymerase beta' chain family. The RNAP catalytic core consists of 2 alpha, 1 beta, 1 beta' and 1 omega subunit. When a sigma factor is associated with the core the holoenzyme is formed, which can initiate transcription. Mg(2+) serves as cofactor. It depends on Zn(2+) as a cofactor.

It carries out the reaction RNA(n) + a ribonucleoside 5'-triphosphate = RNA(n+1) + diphosphate. Functionally, DNA-dependent RNA polymerase catalyzes the transcription of DNA into RNA using the four ribonucleoside triphosphates as substrates. This chain is DNA-directed RNA polymerase subunit beta', found in Methylibium petroleiphilum (strain ATCC BAA-1232 / LMG 22953 / PM1).